Consider the following 88-residue polypeptide: Three-finger toxin 3FTx-2 (88 aa).

An N-terminal signal peptide occupies residues 1–21; sequence MKTLLLTLVVVTIVCLDLGNT. 4 disulfides stabilise this stretch: cysteine 27/cysteine 48, cysteine 41/cysteine 66, cysteine 70/cysteine 81, and cysteine 82/cysteine 87.

This sequence belongs to the three-finger toxin family. Ancestral subfamily. Orphan group II sub-subfamily. Expressed by the venom gland.

It localises to the secreted. Functionally, binds with low affinity to muscular (alpha-1-beta-1-delta-epsilon/CHRNA1-CHRNB1-CHRND-CHRNE) and very low affinity to neuronal (alpha-7/CHRNA7) nicotinic acetylcholine receptor (nAChR). The chain is Three-finger toxin 3FTx-2 from Micrurus corallinus (Brazilian coral snake).